Here is a 287-residue protein sequence, read N- to C-terminus: Inhibitory synaptic factor 1 (287 aa).

A disordered region spans residues methionine 1–arginine 22. Positions methionine 25 to serine 58 form a coiled coil. 2 disordered regions span residues arginine 113–glutamate 174 and cysteine 189–leucine 287. The segment covering glutamate 153–serine 167 has biased composition (low complexity). Acidic residues predominate over residues cysteine 189–leucine 209. Residues arginine 259–leucine 274 are compositionally biased toward polar residues.

This sequence belongs to the INSYN1 family.

The protein resides in the postsynaptic density. Functionally, may be a component of the protein machinery at the inhibitory synapses, probably acting as a scaffold. The sequence is that of Inhibitory synaptic factor 1 from Danio rerio (Zebrafish).